The chain runs to 65 residues: Small ribosomal subunit protein bS21 (65 aa).

The protein belongs to the bacterial ribosomal protein bS21 family.

The polypeptide is Small ribosomal subunit protein bS21 (Chlorobaculum parvum (strain DSM 263 / NCIMB 8327) (Chlorobium vibrioforme subsp. thiosulfatophilum)).